The sequence spans 247 residues: ATP synthase subunit a, chloroplastic (247 aa).

5 helical membrane-spanning segments follow: residues glutamine 38–valine 58, valine 95–leucine 115, isoleucine 134–threonine 154, leucine 199–leucine 219, and glycine 220–glycine 240.

This sequence belongs to the ATPase A chain family. As to quaternary structure, F-type ATPases have 2 components, CF(1) - the catalytic core - and CF(0) - the membrane proton channel. CF(1) has five subunits: alpha(3), beta(3), gamma(1), delta(1), epsilon(1). CF(0) has four main subunits: a, b, b' and c.

The protein localises to the plastid. It localises to the chloroplast thylakoid membrane. Functionally, key component of the proton channel; it plays a direct role in the translocation of protons across the membrane. This chain is ATP synthase subunit a, chloroplastic, found in Panax ginseng (Korean ginseng).